Here is a 493-residue protein sequence, read N- to C-terminus: (+)-menthofuran synthase (493 aa).

Met1 is a topological domain (cytoplasmic). A helical; Signal-anchor for type II membrane protein membrane pass occupies residues 2–19 (AALLVFFSVSLILLAVLF). Residues 20-493 (HKRKSSLSSR…LLVLATPRQS (474 aa)) lie on the Lumenal side of the membrane. The N-linked (GlcNAc...) asparagine glycan is linked to Asn169. Residue Cys434 participates in heme binding.

This sequence belongs to the cytochrome P450 family. Heme is required as a cofactor.

The protein resides in the membrane. It catalyses the reaction (R)-pulegone + reduced [NADPH--hemoprotein reductase] + O2 = (R)-menthofuran + oxidized [NADPH--hemoprotein reductase] + 2 H2O + H(+). The protein operates within secondary metabolite biosynthesis; terpenoid biosynthesis. Functionally, monoterpene synthase that catalyzes the formation of (+)-menthofuran from (+)-pulegone. This is (+)-menthofuran synthase from Mentha piperita (Peppermint).